The following is a 232-amino-acid chain: Orotate phosphoribosyltransferase (232 aa).

Residues Arg107, Lys108, Lys111, and 133–141 (EDLTTDGGS) contribute to the 5-phospho-alpha-D-ribose 1-diphosphate site. Residue Thr137 participates in orotate binding.

Belongs to the purine/pyrimidine phosphoribosyltransferase family. PyrE subfamily. In terms of assembly, homodimer. The cofactor is Mg(2+).

It carries out the reaction orotidine 5'-phosphate + diphosphate = orotate + 5-phospho-alpha-D-ribose 1-diphosphate. It participates in pyrimidine metabolism; UMP biosynthesis via de novo pathway; UMP from orotate: step 1/2. Functionally, catalyzes the transfer of a ribosyl phosphate group from 5-phosphoribose 1-diphosphate to orotate, leading to the formation of orotidine monophosphate (OMP). The sequence is that of Orotate phosphoribosyltransferase from Cereibacter sphaeroides (strain ATCC 17023 / DSM 158 / JCM 6121 / CCUG 31486 / LMG 2827 / NBRC 12203 / NCIMB 8253 / ATH 2.4.1.) (Rhodobacter sphaeroides).